Consider the following 693-residue polypeptide: Heat shock protein homolog SSE1 (693 aa).

The interval 665–693 (LAEKLAAQRKAESEKKESKADAEGDVELD) is disordered. Residues 673 to 686 (RKAESEKKESKADA) are compositionally biased toward basic and acidic residues.

Belongs to the heat shock protein 70 family.

The protein localises to the cytoplasm. The polypeptide is Heat shock protein homolog SSE1 (SSE1) (Lachancea kluyveri (strain ATCC 58438 / CBS 3082 / BCRC 21498 / NBRC 1685 / JCM 7257 / NCYC 543 / NRRL Y-12651) (Yeast)).